The primary structure comprises 326 residues: Phosphatidylinositol:ceramide inositolphosphotransferase (326 aa).

A run of 6 helical transmembrane segments spans residues 33-53 (LLLA…GVHY), 82-102 (SVFT…FIYH), 115-135 (VLAF…STQL), 169-189 (VLFG…LVFV), 199-219 (RLIK…IIAS), and 222-242 (HYSV…FFID). His-181 is a catalytic residue. Catalysis depends on residues His-222 and Asp-226. The tract at residues 306 to 326 (MNGKHGEDINHTLSDATPNGT) is disordered. Polar residues predominate over residues 316–326 (HTLSDATPNGT).

Belongs to the sphingomyelin synthase family.

It is found in the golgi apparatus. Its subcellular location is the trans-Golgi network membrane. Functionally, catalyzes the transfer of the phosphorylinositol group from phosphatidylinositol (PI) to phytoceramide, an essential step in sphingolipid biosynthesis. May play an important role in modulating plant programmed cell death (PCD) associated with defense (e.g. toward Golovinomyces cichoracearum) by promoting sphingolipid metabolism and regulating ceramide accumulation. This Oryza sativa subsp. indica (Rice) protein is Phosphatidylinositol:ceramide inositolphosphotransferase (ERH1).